A 164-amino-acid chain; its full sequence is Lipoprotein signal peptidase (164 aa).

Helical transmembrane passes span 6 to 26 (LGIL…LWLL), 39 to 59 (VTSF…GWFA), 65 to 85 (GQIL…IWMA), and 88 to 108 (TTKL…GNAI). Catalysis depends on residues D118 and D140. A helical transmembrane segment spans residues 141-161 (VAIVVGVVALLYDSLIGAPAV).

The protein belongs to the peptidase A8 family.

It is found in the cell inner membrane. The catalysed reaction is Release of signal peptides from bacterial membrane prolipoproteins. Hydrolyzes -Xaa-Yaa-Zaa-|-(S,diacylglyceryl)Cys-, in which Xaa is hydrophobic (preferably Leu), and Yaa (Ala or Ser) and Zaa (Gly or Ala) have small, neutral side chains.. It functions in the pathway protein modification; lipoprotein biosynthesis (signal peptide cleavage). In terms of biological role, this protein specifically catalyzes the removal of signal peptides from prolipoproteins. The protein is Lipoprotein signal peptidase of Rhodopseudomonas palustris (strain TIE-1).